Here is a 318-residue protein sequence, read N- to C-terminus: L-lactate dehydrogenase (318 aa).

3 residues coordinate NAD(+): Val-16, Asp-37, and Tyr-69. Residues Gln-86, Arg-92, and 124 to 127 contribute to the substrate site; that span reads NPVD. NAD(+) is bound by residues 122–124 and Ser-147; that span reads ASN. 152 to 155 is a substrate binding site; the sequence is DSAR. His-179 acts as the Proton acceptor in catalysis. Tyr-223 is subject to Phosphotyrosine. Substrate is bound at residue Thr-232.

The protein belongs to the LDH/MDH superfamily. LDH family. In terms of assembly, homotetramer.

It localises to the cytoplasm. The catalysed reaction is (S)-lactate + NAD(+) = pyruvate + NADH + H(+). It functions in the pathway fermentation; pyruvate fermentation to lactate; (S)-lactate from pyruvate: step 1/1. Its function is as follows. Catalyzes the conversion of lactate to pyruvate. The polypeptide is L-lactate dehydrogenase (Mycoplasma mycoides subsp. mycoides SC (strain CCUG 32753 / NCTC 10114 / PG1)).